A 234-amino-acid polypeptide reads, in one-letter code: Transcriptional regulatory protein CitB (234 aa).

In terms of domain architecture, Response regulatory spans 5-121 (TTLIVEDEPM…RLQHTLERFA (117 aa)). Aspartate 56 is modified (4-aspartylphosphate). Residues 181–200 (ADSLARILGSSKTTARRYLE) constitute a DNA-binding region (H-T-H motif).

In terms of assembly, in vitro CitB and the CitA kinase domain form a complex, formation of which is enhanced by ATP. Post-translationally, phosphorylated by CitA.

It localises to the cytoplasm. Functionally, member of the two-component regulatory system CitA/CitB essential for expression of citrate-specific fermentation genes. Phosphorylated CitB binds to two sites in the citS-citC intergenic region where it probably activates transcription of both genes. The protein is Transcriptional regulatory protein CitB (citB) of Klebsiella pneumoniae.